Here is a 507-residue protein sequence, read N- to C-terminus: Maturase K (507 aa).

The protein belongs to the intron maturase 2 family. MatK subfamily.

Its subcellular location is the plastid. It is found in the chloroplast. Its function is as follows. Usually encoded in the trnK tRNA gene intron. Probably assists in splicing its own and other chloroplast group II introns. This chain is Maturase K, found in Ranunculus acris (Meadow buttercup).